The primary structure comprises 168 residues: Phosphopantetheine adenylyltransferase (168 aa).

Threonine 14 is a substrate binding site. Residues 14-15 and histidine 22 each bind ATP; that span reads TF. Substrate is bound by residues lysine 46, leucine 78, and arginine 92. ATP is bound by residues 93-95, glutamate 103, and 128-134; these read GLR and YSFISSS.

This sequence belongs to the bacterial CoaD family. As to quaternary structure, homohexamer. The cofactor is Mg(2+).

The protein localises to the cytoplasm. It carries out the reaction (R)-4'-phosphopantetheine + ATP + H(+) = 3'-dephospho-CoA + diphosphate. The protein operates within cofactor biosynthesis; coenzyme A biosynthesis; CoA from (R)-pantothenate: step 4/5. In terms of biological role, reversibly transfers an adenylyl group from ATP to 4'-phosphopantetheine, yielding dephospho-CoA (dPCoA) and pyrophosphate. In Xanthomonas campestris pv. campestris (strain B100), this protein is Phosphopantetheine adenylyltransferase.